Reading from the N-terminus, the 255-residue chain is Large ribosomal subunit protein uL6m (255 aa).

Positions 39–61 (AARRNFSATTTRPSKLGRTPLSI) are disordered.

It belongs to the universal ribosomal protein uL6 family. In terms of assembly, component of the mitochondrial large ribosomal subunit (mt-LSU). Mature N.crassa 74S mitochondrial ribosomes consist of a small (37S) and a large (54S) subunit. The 37S small subunit contains a 16S ribosomal RNA (16S mt-rRNA) and 32 different proteins. The 54S large subunit contains a 23S rRNA (23S mt-rRNA) and 42 different proteins.

It is found in the mitochondrion. In terms of biological role, component of the mitochondrial ribosome (mitoribosome), a dedicated translation machinery responsible for the synthesis of mitochondrial genome-encoded proteins, including at least some of the essential transmembrane subunits of the mitochondrial respiratory chain. The mitoribosomes are attached to the mitochondrial inner membrane and translation products are cotranslationally integrated into the membrane. The sequence is that of Large ribosomal subunit protein uL6m (mrpl6) from Neurospora crassa (strain ATCC 24698 / 74-OR23-1A / CBS 708.71 / DSM 1257 / FGSC 987).